A 109-amino-acid chain; its full sequence is Aquaporin-2 (109 aa).

Topologically, residues 1–6 are cytoplasmic; it reads SIAFSR. Residues 7–27 form a helical membrane-spanning segment; sequence AVLSEFLATLLFVFFGLGSAL. Topologically, residues 28–35 are extracellular; sequence NWPQALPS. The helical transmembrane segment at 36–54 threads the bilayer; that stretch reads VLQIAMAFGLAIGTLVQTL. The Cytoplasmic portion of the chain corresponds to 55 to 59; it reads GHISG. Residues 60-69 constitute an intramembrane region (discontinuously helical); sequence AHINPAVTIA. The NPA 1 motif lies at 63-65; that stretch reads NPA. Residues 70-80 lie on the Cytoplasmic side of the membrane; that stretch reads CLVGCHVSFLR. The chain crosses the membrane as a helical span at residues 81–102; sequence ALFYLAAQLLGAVAGAALLHEL. Topologically, residues 103–109 are extracellular; the sequence is TPPDIRG.

This sequence belongs to the MIP/aquaporin (TC 1.A.8) family. As to quaternary structure, homotetramer. In terms of processing, serine phosphorylation is necessary and sufficient for expression at the apical membrane. Endocytosis is not phosphorylation-dependent. N-glycosylated.

The protein localises to the apical cell membrane. It is found in the basolateral cell membrane. It localises to the cell membrane. Its subcellular location is the cytoplasmic vesicle membrane. The protein resides in the golgi apparatus. The protein localises to the trans-Golgi network membrane. It carries out the reaction H2O(in) = H2O(out). The enzyme catalyses glycerol(in) = glycerol(out). Its function is as follows. Forms a water-specific channel that provides the plasma membranes of renal collecting duct with high permeability to water, thereby permitting water to move in the direction of an osmotic gradient. Plays an essential role in renal water homeostasis. Could also be permeable to glycerol. The polypeptide is Aquaporin-2 (Procavia capensis habessinica (Abyssinian hyrax)).